The chain runs to 118 residues: Small ribosomal subunit protein uS13 (118 aa).

Positions 91 to 118 (HRRGLPVRGQRTKTNARTRKGPRKPIKK) are disordered.

It belongs to the universal ribosomal protein uS13 family. Part of the 30S ribosomal subunit. Forms a loose heterodimer with protein S19. Forms two bridges to the 50S subunit in the 70S ribosome.

Functionally, located at the top of the head of the 30S subunit, it contacts several helices of the 16S rRNA. In the 70S ribosome it contacts the 23S rRNA (bridge B1a) and protein L5 of the 50S subunit (bridge B1b), connecting the 2 subunits; these bridges are implicated in subunit movement. Contacts the tRNAs in the A and P-sites. The protein is Small ribosomal subunit protein uS13 of Serratia proteamaculans (strain 568).